The following is a 273-amino-acid chain: Imidazole glycerol phosphate synthase subunit HisF (273 aa).

Active-site residues include D11 and D134.

It belongs to the HisA/HisF family. In terms of assembly, heterodimer of HisH and HisF.

It is found in the cytoplasm. The catalysed reaction is 5-[(5-phospho-1-deoxy-D-ribulos-1-ylimino)methylamino]-1-(5-phospho-beta-D-ribosyl)imidazole-4-carboxamide + L-glutamine = D-erythro-1-(imidazol-4-yl)glycerol 3-phosphate + 5-amino-1-(5-phospho-beta-D-ribosyl)imidazole-4-carboxamide + L-glutamate + H(+). Its pathway is amino-acid biosynthesis; L-histidine biosynthesis; L-histidine from 5-phospho-alpha-D-ribose 1-diphosphate: step 5/9. Its function is as follows. IGPS catalyzes the conversion of PRFAR and glutamine to IGP, AICAR and glutamate. The HisF subunit catalyzes the cyclization activity that produces IGP and AICAR from PRFAR using the ammonia provided by the HisH subunit. This is Imidazole glycerol phosphate synthase subunit HisF from Methanosarcina mazei (strain ATCC BAA-159 / DSM 3647 / Goe1 / Go1 / JCM 11833 / OCM 88) (Methanosarcina frisia).